We begin with the raw amino-acid sequence, 605 residues long: Endonuclease 8-like 3 (605 aa).

Catalysis depends on Val2, which acts as the Schiff-base intermediate with DNA; via amino nitrogen. 2 residues coordinate DNA: Asn192 and Arg271. Residues 247–281 (KVYKRPNCGQCHCRITVCRFGDNNRMTYFCPHCQK) form an FPG-type zinc finger. A RanBP2-type zinc finger spans residues 317-346 (SEEHWTCVVCTLINKPSSKACDACLTSRPI). Ser450 is subject to Phosphoserine. The disordered stretch occupies residues 456–477 (ESKLFSPAHKKPKTAQYSSPEL). The Zn(2+) site is built by Cys507, His510, Cys533, Cys541, Cys554, His556, Cys579, and Cys587. 2 GRF-type zinc fingers span residues 507-550 (CSKH…ADLS) and 554-596 (CNHG…AENG).

The protein belongs to the FPG family. As to expression, expressed in keratinocytes and embryonic fibroblasts (at protein level). Also detected in thymus, testis and fetal lung primary fibroblasts.

The protein localises to the nucleus. It is found in the chromosome. It catalyses the reaction 2'-deoxyribonucleotide-(2'-deoxyribose 5'-phosphate)-2'-deoxyribonucleotide-DNA = a 3'-end 2'-deoxyribonucleotide-(2,3-dehydro-2,3-deoxyribose 5'-phosphate)-DNA + a 5'-end 5'-phospho-2'-deoxyribonucleoside-DNA + H(+). In terms of biological role, DNA glycosylase which prefers single-stranded DNA (ssDNA), or partially ssDNA structures such as bubble and fork structures, to double-stranded DNA (dsDNA). Mediates interstrand cross-link repair in response to replication stress: acts by mediating DNA glycosylase activity, cleaving one of the two N-glycosyl bonds comprising the interstrand cross-link, which avoids the formation of a double-strand break but generates an abasic site that is bypassed by translesion synthesis polymerases. In vitro, displays strong glycosylase activity towards the hydantoin lesions spiroiminodihydantoin (Sp) and guanidinohydantoin (Gh) in both ssDNA and dsDNA; also recognizes FapyA, FapyG, 5-OHU, 5-OHC, 5-OHMH, Tg and 8-oxoA lesions in ssDNA. No activity on 8-oxoG detected. Also shows weak DNA-(apurinic or apyrimidinic site) lyase activity. In vivo, appears to be the primary enzyme involved in removing Sp and Gh from ssDNA in neonatal tissues. The sequence is that of Endonuclease 8-like 3 (NEIL3) from Homo sapiens (Human).